The primary structure comprises 157 residues: Peptide methionine sulfoxide reductase MsrA (157 aa).

The active site involves Cys-10.

This sequence belongs to the MsrA Met sulfoxide reductase family.

The enzyme catalyses L-methionyl-[protein] + [thioredoxin]-disulfide + H2O = L-methionyl-(S)-S-oxide-[protein] + [thioredoxin]-dithiol. It catalyses the reaction [thioredoxin]-disulfide + L-methionine + H2O = L-methionine (S)-S-oxide + [thioredoxin]-dithiol. In terms of biological role, has an important function as a repair enzyme for proteins that have been inactivated by oxidation. Catalyzes the reversible oxidation-reduction of methionine sulfoxide in proteins to methionine. This Clostridium botulinum (strain Hall / ATCC 3502 / NCTC 13319 / Type A) protein is Peptide methionine sulfoxide reductase MsrA.